The following is a 787-amino-acid chain: Phenylalanine--tRNA ligase beta subunit (787 aa).

The 111-residue stretch at 39 to 149 (APAFAGVVIA…EDAPVGTNIR (111 aa)) folds into the tRNA-binding domain. A B5 domain is found at 400 to 475 (PEVKQVGLRL…RVYGYENIPD (76 aa)). 4 residues coordinate Mg(2+): D453, D459, E462, and E463. Residues 694–786 (SKFQPVRRDL…AATAAGARLR (93 aa)) form the FDX-ACB domain.

The protein belongs to the phenylalanyl-tRNA synthetase beta subunit family. Type 1 subfamily. Tetramer of two alpha and two beta subunits. It depends on Mg(2+) as a cofactor.

The protein localises to the cytoplasm. The enzyme catalyses tRNA(Phe) + L-phenylalanine + ATP = L-phenylalanyl-tRNA(Phe) + AMP + diphosphate + H(+). The protein is Phenylalanine--tRNA ligase beta subunit (pheT) of Neisseria meningitidis serogroup A / serotype 4A (strain DSM 15465 / Z2491).